The primary structure comprises 426 residues: Serine--tRNA ligase (426 aa).

L-serine is bound at residue 231–233; sequence TAE. 262–264 provides a ligand contact to ATP; the sequence is RSE. Glu285 contributes to the L-serine binding site. ATP is bound at residue 349–352; the sequence is EISS. Position 385 (Ser385) interacts with L-serine.

The protein belongs to the class-II aminoacyl-tRNA synthetase family. Type-1 seryl-tRNA synthetase subfamily. As to quaternary structure, homodimer. The tRNA molecule binds across the dimer.

The protein localises to the cytoplasm. The enzyme catalyses tRNA(Ser) + L-serine + ATP = L-seryl-tRNA(Ser) + AMP + diphosphate + H(+). The catalysed reaction is tRNA(Sec) + L-serine + ATP = L-seryl-tRNA(Sec) + AMP + diphosphate + H(+). It participates in aminoacyl-tRNA biosynthesis; selenocysteinyl-tRNA(Sec) biosynthesis; L-seryl-tRNA(Sec) from L-serine and tRNA(Sec): step 1/1. Its function is as follows. Catalyzes the attachment of serine to tRNA(Ser). Is also able to aminoacylate tRNA(Sec) with serine, to form the misacylated tRNA L-seryl-tRNA(Sec), which will be further converted into selenocysteinyl-tRNA(Sec). The sequence is that of Serine--tRNA ligase from Lysinibacillus sphaericus (strain C3-41).